Consider the following 89-residue polypeptide: Small ribosomal subunit protein uS15 (89 aa).

The protein belongs to the universal ribosomal protein uS15 family. As to quaternary structure, part of the 30S ribosomal subunit. Forms a bridge to the 50S subunit in the 70S ribosome, contacting the 23S rRNA.

Its function is as follows. One of the primary rRNA binding proteins, it binds directly to 16S rRNA where it helps nucleate assembly of the platform of the 30S subunit by binding and bridging several RNA helices of the 16S rRNA. Functionally, forms an intersubunit bridge (bridge B4) with the 23S rRNA of the 50S subunit in the ribosome. In Pelodictyon phaeoclathratiforme (strain DSM 5477 / BU-1), this protein is Small ribosomal subunit protein uS15.